The sequence spans 1054 residues: Reverse gyrase (1054 aa).

Residues 1–43 form an RG N-terminal-type zinc finger; the sequence is MIPVVYSNLCPVCGGDLESKEIEKHVCFRKKRSLCLFPEDFLL. 4 residues coordinate Zn(2+): cysteine 10, cysteine 13, cysteine 27, and cysteine 35. Cysteine 35 and cysteine 650 are oxidised to a cystine. ATP is bound by residues glutamine 61, lysine 84, threonine 85, and serine 86. Positions 65 to 245 constitute a Helicase ATP-binding domain; sequence AKRILRKESF…FRQLLNFDIG (181 aa). The DEAD box signature appears at 182 to 185; that stretch reads DDVD. The latch region stretch occupies residues 352–427; sequence PSFRVTIEDI…EGEVIFPDLR (76 aa). Residues 502-1054 are topoisomerase I; it reads DLIKPALFIV…DLYAEIKSID (553 aa). The 157-residue stretch at 506–662 folds into the Toprim domain; the sequence is PALFIVESPT…VKRAEFHEVT (157 aa). Position 512 (glutamate 512) interacts with Mg(2+). Residues 581–609 form an RG C-terminal-type zinc finger; sequence IKRCRDCGYQFTEDRESCPKCGSENVDNS. Zn(2+)-binding residues include cysteine 584, cysteine 587, cysteine 598, and cysteine 601. Aspartate 631 is a binding site for Mg(2+). Residues 677 to 1054 enclose the Topo IA-type catalytic domain; it reads DENLVKAQVV…DLYAEIKSID (378 aa). Tyrosine 809 acts as the O-(5'-phospho-DNA)-tyrosine intermediate in catalysis.

This sequence in the N-terminal section; belongs to the DEAD box helicase family. DDVD subfamily. In the C-terminal section; belongs to the type IA topoisomerase family. In terms of assembly, monomer. Zn(2+) serves as cofactor. Mg(2+) is required as a cofactor.

The protein localises to the cytoplasm. It carries out the reaction ATP + H2O = ADP + phosphate + H(+). Its function is as follows. Modifies the topological state of DNA by introducing positive supercoils in an ATP-dependent process, increasing the linking number in steps of +1. Very efficient supercoiling occurs on relaxed DNA with a single-stranded bubble; the minimal bubble is 20 nucleotides (nt) and up to 10 positive supercoils can be introduced into a 3.1 kb plasmid with a 50 nt bubble. Positively supercoils DNA with all (d)NTPS, although it requires about 10-fold more of non-(d)ATP. In the absence of ATP (or at low levels of enzyme), or in the presence of ADP, relaxes negative supercoils. Only relaxes positive supercoils when the substrate contains a bubble. Also promotes strand annealing of complementary ssDNA circles. Binds to single-stranded DNA, transiently cleaves and then rejoins the ends, introducing a positive supercoil in the process. The scissile phosphodiester is attacked by the catalytic tyrosine of the enzyme, resulting in the formation of a DNA-(5'-phosphotyrosyl)-enzyme intermediate. Probably involved in rewinding DNA strands in regions of the chromosome that have opened up to allow replication, transcription, DNA repair and/or for DNA protection. In vitro protects DNA against degradation at 90 degrees Celsius, reducing dsDNA breakage about 8-fold; ATP hydrolysis is not necessary, while ADP decreases the protection somewhat. Coats all forms of dsDNA; the DNA is protected against cleavage and transcription. Recognizes nicked DNA and forms a coat at the nicking site, which may help hold DNA in a structure amenable to repair. The chain is Reverse gyrase from Archaeoglobus fulgidus (strain ATCC 49558 / DSM 4304 / JCM 9628 / NBRC 100126 / VC-16).